The chain runs to 267 residues: NADP-dependent mannitol dehydrogenase (267 aa).

Residues Asn108 and Lys141 each coordinate NADP(+). Ser160 serves as the catalytic Proton donor. The NADP(+) site is built by Tyr175, Lys179, Ile207, and Thr209. Catalysis depends on Tyr175, which acts as the Proton acceptor. Lys179 acts as the Lowers pKa of active site Tyr in catalysis.

The protein belongs to the short-chain dehydrogenases/reductases (SDR) family. In terms of assembly, exists as monomer, dimer and tetramer.

The enzyme catalyses D-mannitol + NADP(+) = D-fructose + NADPH + H(+). Interconverts D-mannitol and D-fructose. Not active with fructose 6-phosphate or NADH. The protein is NADP-dependent mannitol dehydrogenase of Davidiella tassiana (Mycosphaerella tassiana).